The following is a 405-amino-acid chain: Argininosuccinate synthase (405 aa).

ATP contacts are provided by residues 10-18 (AYSGGLDTS) and Ala-37. Positions 88 and 93 each coordinate L-citrulline. Gly-118 lines the ATP pocket. L-aspartate-binding residues include Thr-120, Asn-124, and Asp-125. Asn-124 lines the L-citrulline pocket. L-citrulline contacts are provided by Arg-128, Ser-179, Ser-188, Glu-264, and Tyr-276.

Belongs to the argininosuccinate synthase family. Type 1 subfamily. Homotetramer.

It is found in the cytoplasm. The catalysed reaction is L-citrulline + L-aspartate + ATP = 2-(N(omega)-L-arginino)succinate + AMP + diphosphate + H(+). It participates in amino-acid biosynthesis; L-arginine biosynthesis; L-arginine from L-ornithine and carbamoyl phosphate: step 2/3. The polypeptide is Argininosuccinate synthase (Pseudomonas entomophila (strain L48)).